Reading from the N-terminus, the 209-residue chain is Thymidylate kinase (209 aa).

Residue Gly11–Thr18 participates in ATP binding.

This sequence belongs to the thymidylate kinase family.

The catalysed reaction is dTMP + ATP = dTDP + ADP. Phosphorylation of dTMP to form dTDP in both de novo and salvage pathways of dTTP synthesis. The polypeptide is Thymidylate kinase (Streptococcus thermophilus (strain ATCC BAA-250 / LMG 18311)).